We begin with the raw amino-acid sequence, 627 residues long: Pescadillo homolog (627 aa).

The region spanning 321–414 (RLRTLFKGLK…QLLPTNKYFI (94 aa)) is the BRCT domain. Disordered stretches follow at residues 436-471 (PEEK…AVDQ), 489-562 (YKKY…LQAR), and 596-627 (FEAG…KLGK). Residues serine 453 and serine 457 each carry the phosphoserine modification. Acidic residues-rich tracts occupy residues 453–471 (SDDD…AVDQ) and 498–521 (VNED…EELD). The segment covering 522–533 (EQAKRLKEEKQK) has biased composition (basic and acidic residues). The span at 540–549 (KVHKVNKRQL) shows a compositional bias: basic residues. Composition is skewed to basic and acidic residues over residues 550–559 (HKAEVDEHRL) and 596–605 (FEAGEKEARK). Positions 616–627 (AAAAAKASKLGK) are enriched in low complexity.

Belongs to the pescadillo family.

The protein localises to the nucleus. The protein resides in the nucleolus. It localises to the nucleoplasm. Its function is as follows. Required for maturation of ribosomal RNAs and formation of the large ribosomal subunit. This Drosophila ananassae (Fruit fly) protein is Pescadillo homolog.